A 487-amino-acid chain; its full sequence is Photosystem II CP43 reaction center protein (487 aa).

A propeptide spanning residues methionine 1–glutamate 28 is cleaved from the precursor. 5 helical membrane-spanning segments follow: residues leucine 83–alanine 107, leucine 148–asparagine 169, lysine 192–serine 214, lysine 269–serine 289, and tryptophan 305–alanine 326. Residue glutamate 381 coordinates [CaMn4O5] cluster. The chain crosses the membrane as a helical span at residues arginine 461–proline 485.

The protein belongs to the PsbB/PsbC family. PsbC subfamily. PSII is composed of 1 copy each of membrane proteins PsbA, PsbB, PsbC, PsbD, PsbE, PsbF, PsbH, PsbI, PsbJ, PsbK, PsbL, PsbM, PsbT, PsbX, PsbY, PsbZ, Psb30/Ycf12, at least 3 peripheral proteins of the oxygen-evolving complex and a large number of cofactors. It forms dimeric complexes. Binds multiple chlorophylls and provides some of the ligands for the Ca-4Mn-5O cluster of the oxygen-evolving complex. It may also provide a ligand for a Cl- that is required for oxygen evolution. PSII binds additional chlorophylls, carotenoids and specific lipids. is required as a cofactor.

Its subcellular location is the plastid. It localises to the chloroplast thylakoid membrane. Its function is as follows. One of the components of the core complex of photosystem II (PSII). It binds chlorophyll and helps catalyze the primary light-induced photochemical processes of PSII. PSII is a light-driven water:plastoquinone oxidoreductase, using light energy to abstract electrons from H(2)O, generating O(2) and a proton gradient subsequently used for ATP formation. In Porphyra purpurea (Red seaweed), this protein is Photosystem II CP43 reaction center protein.